Here is a 257-residue protein sequence, read N- to C-terminus: Imidazole glycerol phosphate synthase subunit HisF (257 aa).

Catalysis depends on residues Asp-11 and Asp-130.

Belongs to the HisA/HisF family. Heterodimer of HisH and HisF.

It localises to the cytoplasm. The enzyme catalyses 5-[(5-phospho-1-deoxy-D-ribulos-1-ylimino)methylamino]-1-(5-phospho-beta-D-ribosyl)imidazole-4-carboxamide + L-glutamine = D-erythro-1-(imidazol-4-yl)glycerol 3-phosphate + 5-amino-1-(5-phospho-beta-D-ribosyl)imidazole-4-carboxamide + L-glutamate + H(+). The protein operates within amino-acid biosynthesis; L-histidine biosynthesis; L-histidine from 5-phospho-alpha-D-ribose 1-diphosphate: step 5/9. IGPS catalyzes the conversion of PRFAR and glutamine to IGP, AICAR and glutamate. The HisF subunit catalyzes the cyclization activity that produces IGP and AICAR from PRFAR using the ammonia provided by the HisH subunit. In Aliivibrio fischeri (strain ATCC 700601 / ES114) (Vibrio fischeri), this protein is Imidazole glycerol phosphate synthase subunit HisF.